The following is a 298-amino-acid chain: (DL)-glycerol-3-phosphatase 1, mitochondrial (298 aa).

A mitochondrion-targeting transit peptide spans 1–46; sequence MLTTPTRFVALRIPFRSSNKIPISIAPSPKVFPRKPVIRVPASLRF. Catalysis depends on aspartate 77, which acts as the Nucleophile. Residues aspartate 77, aspartate 79, and aspartate 242 each coordinate Mg(2+). Aspartate 79 functions as the Proton donor in the catalytic mechanism.

It belongs to the HAD-like hydrolase superfamily. DOG/GPP family. It depends on Mg(2+) as a cofactor. In terms of tissue distribution, ubiquitous with highest expression in siliques. Mainly restricted to the meristem of immature flower and vascular elements of the root, shoot, leave, siliqua and developing embryo (at the protein level).

The protein localises to the mitochondrion. It catalyses the reaction sn-glycerol 1-phosphate + H2O = glycerol + phosphate. It carries out the reaction sn-glycerol 3-phosphate + H2O = glycerol + phosphate. The enzyme catalyses 5-amino-6-(5-phospho-D-ribitylamino)uracil + H2O = 5-amino-6-(D-ribitylamino)uracil + phosphate. In terms of biological role, acts as a glycerol-3-phosphatase with higher stereospecificity for L-glycerol-3-phosphate than DL-glycerol-3-phosphate. Can also dephosphorylate in vitro 5-amino-6-(5-phospho-D-ribitylamino)uracil, also known as ARPP. The polypeptide is (DL)-glycerol-3-phosphatase 1, mitochondrial (Arabidopsis thaliana (Mouse-ear cress)).